Reading from the N-terminus, the 246-residue chain is Probable ABC transporter permease protein BMEII0107 (246 aa).

Helical transmembrane passes span 12 to 32, 63 to 83, 94 to 114, 122 to 142, 172 to 192, and 211 to 231; these read LLSFAVGIGGWYLLTATGAVV, VLSGFVLGVALAIPVGFLMGW, WVQFFRMIPPLAVIPLAIVTL, IFVIFLASFLSSVVATYQGVI, VPFILVGVRIGLGSAWATVVA, and LYYDLPTIFVSLVTIGILGLF. Residues 56 to 236 enclose the ABC transmembrane type-1 domain; that stretch reads IFASLRRVLS…ILGLFMDRLL (181 aa).

Belongs to the binding-protein-dependent transport system permease family. The complex is composed of two ATP-binding proteins (BMEII0108), two transmembrane proteins (BMEII0107) and a solute-binding protein (BMEII0109).

The protein resides in the cell inner membrane. Its function is as follows. Probably part of an ABC transporter complex. Probably responsible for the translocation of the substrate across the membrane. The chain is Probable ABC transporter permease protein BMEII0107 from Brucella melitensis biotype 1 (strain ATCC 23456 / CCUG 17765 / NCTC 10094 / 16M).